A 155-amino-acid polypeptide reads, in one-letter code: 6,7-dimethyl-8-ribityllumazine synthase (155 aa).

Residues phenylalanine 24, 58–60 (AFE), and 82–84 (AVI) each bind 5-amino-6-(D-ribitylamino)uracil. Residue 87 to 88 (ST) coordinates (2S)-2-hydroxy-3-oxobutyl phosphate. The Proton donor role is filled by histidine 90. Phenylalanine 115 lines the 5-amino-6-(D-ribitylamino)uracil pocket. Arginine 129 serves as a coordination point for (2S)-2-hydroxy-3-oxobutyl phosphate.

This sequence belongs to the DMRL synthase family.

It carries out the reaction (2S)-2-hydroxy-3-oxobutyl phosphate + 5-amino-6-(D-ribitylamino)uracil = 6,7-dimethyl-8-(1-D-ribityl)lumazine + phosphate + 2 H2O + H(+). The protein operates within cofactor biosynthesis; riboflavin biosynthesis; riboflavin from 2-hydroxy-3-oxobutyl phosphate and 5-amino-6-(D-ribitylamino)uracil: step 1/2. Functionally, catalyzes the formation of 6,7-dimethyl-8-ribityllumazine by condensation of 5-amino-6-(D-ribitylamino)uracil with 3,4-dihydroxy-2-butanone 4-phosphate. This is the penultimate step in the biosynthesis of riboflavin. This is 6,7-dimethyl-8-ribityllumazine synthase from Acetivibrio thermocellus (strain ATCC 27405 / DSM 1237 / JCM 9322 / NBRC 103400 / NCIMB 10682 / NRRL B-4536 / VPI 7372) (Clostridium thermocellum).